A 736-amino-acid polypeptide reads, in one-letter code: uncharacterized protein (736 aa).

2 ABC transporter domains span residues 183–459 (IKID…KQME) and 518–734 (LQMS…TMTI). Residues 215-222 (GRNGIGKS) and 551-558 (GPNGAGKS) each bind ATP.

It belongs to the ABC transporter superfamily.

Its subcellular location is the cytoplasm. This is an uncharacterized protein from Schizosaccharomyces pombe (strain 972 / ATCC 24843) (Fission yeast).